The chain runs to 113 residues: Putative pterin-4-alpha-carbinolamine dehydratase (113 aa).

The protein belongs to the pterin-4-alpha-carbinolamine dehydratase family.

It carries out the reaction (4aS,6R)-4a-hydroxy-L-erythro-5,6,7,8-tetrahydrobiopterin = (6R)-L-erythro-6,7-dihydrobiopterin + H2O. The sequence is that of Putative pterin-4-alpha-carbinolamine dehydratase from Pelodictyon phaeoclathratiforme (strain DSM 5477 / BU-1).